The primary structure comprises 703 residues: 1,4-alpha-glucan-branching enzyme (703 aa).

(1,4-alpha-D-glucosyl)n is bound by residues tryptophan 93 and lysine 130. Catalysis depends on aspartate 355, which acts as the Nucleophile. Glutamate 415 acts as the Proton donor in catalysis.

The protein belongs to the glycosyl hydrolase 13 family. GlgB subfamily.

It is found in the cytoplasm. It carries out the reaction Transfers a segment of a (1-&gt;4)-alpha-D-glucan chain to a primary hydroxy group in a similar glucan chain.. Its pathway is glycan biosynthesis; glycogen biosynthesis. Functionally, glycogen-branching enzyme participates in the glycogen biosynthetic process along with glycogenin and glycogen synthase. Generates alpha-1,6-glucosidic branches from alpha-1,4-linked glucose chains, to increase solubility of the glycogen polymer. This is 1,4-alpha-glucan-branching enzyme (GLC3) from Eremothecium gossypii (strain ATCC 10895 / CBS 109.51 / FGSC 9923 / NRRL Y-1056) (Yeast).